A 144-amino-acid chain; its full sequence is 6-pyruvoyl tetrahydrobiopterin synthase (144 aa).

Ser-18 is subject to Phosphoserine. His-23 lines the Zn(2+) pocket. Ser-27 bears the Phosphoserine mark. Cys-42 acts as the Proton acceptor in catalysis. The Zn(2+) site is built by His-48 and His-50. His-89 functions as the Charge relay system in the catalytic mechanism. Tyr-127 is modified (phosphotyrosine). The active-site Charge relay system is Glu-133.

This sequence belongs to the PTPS family. In terms of assembly, homodimer. Homohexamer formed of two homotrimers in a head to head fashion. It depends on Zn(2+) as a cofactor. Post-translationally, phosphorylation of Ser-18 is required for maximal enzyme activity.

The catalysed reaction is 7,8-dihydroneopterin 3'-triphosphate = 6-pyruvoyl-5,6,7,8-tetrahydropterin + triphosphate + H(+). The protein operates within cofactor biosynthesis; tetrahydrobiopterin biosynthesis; tetrahydrobiopterin from 7,8-dihydroneopterin triphosphate: step 1/3. Involved in the biosynthesis of tetrahydrobiopterin, an essential cofactor of aromatic amino acid hydroxylases. Catalyzes the transformation of 7,8-dihydroneopterin triphosphate into 6-pyruvoyl tetrahydropterin. This Mus musculus (Mouse) protein is 6-pyruvoyl tetrahydrobiopterin synthase.